The primary structure comprises 236 residues: Sugar fermentation stimulation protein homolog (236 aa).

Belongs to the SfsA family.

This Methylobacterium nodulans (strain LMG 21967 / CNCM I-2342 / ORS 2060) protein is Sugar fermentation stimulation protein homolog.